Here is a 158-residue protein sequence, read N- to C-terminus: Protein Smg homolog (158 aa).

Belongs to the Smg family.

The chain is Protein Smg homolog from Shewanella sp. (strain ANA-3).